Reading from the N-terminus, the 133-residue chain is Ribonuclease VapC17 (133 aa).

Residues D7 and D93 each coordinate Mg(2+). The region spanning 30–118 (AICDIGELEW…HHDRDYKRIA (89 aa)) is the PINc domain.

It belongs to the PINc/VapC protein family. Mg(2+) is required as a cofactor.

Toxic component of a type II toxin-antitoxin (TA) system. An RNase. The cognate antitoxin is VapB17. The sequence is that of Ribonuclease VapC17 from Mycobacterium tuberculosis (strain CDC 1551 / Oshkosh).